Consider the following 154-residue polypeptide: Bacterial ferritin (154 aa).

In terms of domain architecture, Ferritin-like diiron spans 1–145 (MQGHPEVIDY…QQLGLIARMG (145 aa)). Glutamate 18, histidine 46, glutamate 47, glutamate 50, glutamate 51, histidine 54, glutamate 93, aspartate 129, and histidine 130 together coordinate Fe(3+).

The protein belongs to the bacterioferritin family. The bacterioferritin (BFR) complex is formed of 24 subunits (FtnA and BfrB) arranged as 12 homodimers. The holocomplex contains about 8.7% Fe and 8.0% phosphate. In vivo purifies with BfrB in varying ratios, depending on the O(2) content; as O(2) decreases FtnA content rises. Pure FtnA BFR complexes are not isolated in situ, although in a bfrB deletion some iron will accumulate in FtnA ferritin complexes. Upon crystallization forms homooligomers of 24 subunits, the BFR complex, arranged as 12 dimers, that are packed together to form an approximately spherical molecule with a central cavity, in which large amounts of iron can be deposited. The BFR shell has three- and four-fold pores; Fe(2+) may move in and out of the shell via the four-fold pores. Does not interact with Bfd.

The protein localises to the cytoplasm. It carries out the reaction 4 Fe(2+) + O2 + 4 H(+) = 4 Fe(3+) + 2 H2O. It catalyses the reaction Fe(2+)(in) = Fe(2+)(out). Functionally, plays a role in catalase A (katA) expression; activity is required for optimal KatA activity and resistance to H(2)O(2). Iron-storage protein that is part of the heterooligomeric bacterioferritin (BFR) complex. The ferroxidase center binds Fe(2+), oxidizes it using dioxygen to Fe(3+), and participates in subsequent Fe(3+) oxide mineral core formation within the central cavity of the BFR protein shell. Can store up to 520 iron atoms per ferritin protein molecule. Iron release requires only the input of electrons from ferredoxin NADP reductase (FPR), does not require Bfd. Does not bind heme. This Pseudomonas aeruginosa (strain ATCC 15692 / DSM 22644 / CIP 104116 / JCM 14847 / LMG 12228 / 1C / PRS 101 / PAO1) protein is Bacterial ferritin.